The sequence spans 131 residues: RutC family protein YjgH (131 aa).

This sequence belongs to the RutC family.

In Escherichia coli (strain K12), this protein is RutC family protein YjgH (yjgH).